We begin with the raw amino-acid sequence, 212 residues long: Probable GH family 25 lysozyme 2 (212 aa).

An N-terminal signal peptide occupies residues 1–19 (MRFIALLISFFALLKVISA). One can recognise a Ch-type lysozyme domain in the interval 20 to 212 (ISGVDISSAS…GLGFDLNWYP (193 aa)). Active-site residues include D24, D112, and E114.

It belongs to the glycosyl hydrolase 25 family.

Its subcellular location is the secreted. It catalyses the reaction Hydrolysis of (1-&gt;4)-beta-linkages between N-acetylmuramic acid and N-acetyl-D-glucosamine residues in a peptidoglycan and between N-acetyl-D-glucosamine residues in chitodextrins.. The protein is Probable GH family 25 lysozyme 2 of Dictyostelium discoideum (Social amoeba).